A 361-amino-acid chain; its full sequence is Phosphoserine aminotransferase (361 aa).

R42 contributes to the L-glutamate binding site. Pyridoxal 5'-phosphate is bound by residues 76-77 (AT), W102, T152, D172, and Q195. N6-(pyridoxal phosphate)lysine is present on K196. Residue 237–238 (NT) participates in pyridoxal 5'-phosphate binding.

The protein belongs to the class-V pyridoxal-phosphate-dependent aminotransferase family. SerC subfamily. Homodimer. Pyridoxal 5'-phosphate is required as a cofactor.

It localises to the cytoplasm. It carries out the reaction O-phospho-L-serine + 2-oxoglutarate = 3-phosphooxypyruvate + L-glutamate. The catalysed reaction is 4-(phosphooxy)-L-threonine + 2-oxoglutarate = (R)-3-hydroxy-2-oxo-4-phosphooxybutanoate + L-glutamate. It functions in the pathway amino-acid biosynthesis; L-serine biosynthesis; L-serine from 3-phospho-D-glycerate: step 2/3. Its pathway is cofactor biosynthesis; pyridoxine 5'-phosphate biosynthesis; pyridoxine 5'-phosphate from D-erythrose 4-phosphate: step 3/5. Its function is as follows. Catalyzes the reversible conversion of 3-phosphohydroxypyruvate to phosphoserine and of 3-hydroxy-2-oxo-4-phosphonooxybutanoate to phosphohydroxythreonine. The protein is Phosphoserine aminotransferase of Xanthomonas euvesicatoria pv. vesicatoria (strain 85-10) (Xanthomonas campestris pv. vesicatoria).